Here is a 225-residue protein sequence, read N- to C-terminus: tRNA (guanine-N(1)-)-methyltransferase (225 aa).

S-adenosyl-L-methionine contacts are provided by residues G112 and 132–137 (IGDYVL).

The protein belongs to the RNA methyltransferase TrmD family. In terms of assembly, homodimer.

The protein resides in the cytoplasm. It carries out the reaction guanosine(37) in tRNA + S-adenosyl-L-methionine = N(1)-methylguanosine(37) in tRNA + S-adenosyl-L-homocysteine + H(+). Functionally, specifically methylates guanosine-37 in various tRNAs. The chain is tRNA (guanine-N(1)-)-methyltransferase from Porphyromonas gingivalis (strain ATCC 33277 / DSM 20709 / CIP 103683 / JCM 12257 / NCTC 11834 / 2561).